The primary structure comprises 1392 residues: MEVLMAERANLVFHNKAIDGTAMKRLISRLIEHFGMAYTSHILDQVKTLGFQQATATSISLGIDDLLTIPSKGWLVQDAEQQSLILEKHHQYGNVHAVEKLRQSIEIWYATSEYLRQEMNPNFRMTDPFNPVHIMSFSGARGNASQVHQLVGMRGLMSDPQGQMIDLPIQSNLREGLSLTEYIISCYGARKGVVDTAVRTSDAGYLTRRLVEVVQHIVVRRTDCGTARGISVSPRNGIMPERIFSQTLIGRVLADDIYMGSRCIATRNQAIGIGLVNRFITFRAQPISIRTPFTCRSTSWICRLCYGRSPTHGDLVELGEAVGIIAGQSIGEPGTQLTLRTFHTGGVFTGGTAEHVRAPSNGKIKFNEDLVHPTRTRHGHPAFLCSIDLYVTIESEDILHNVNIPPKSLLLVQNDQYVESEQVIAEIRAGISTLNFKEKVRKHIYSDSDGEMHWSTDVYHAPEFTYGNVHLLPKTSHLWILLGGPCRSSLVYLSIHKDQDQMNAHSLSGKRRYTSNLSVTNDQARQKLFSSDFYGQKEDRIPDYSDLNRIICTGQYNLVYSPILHGNSALLSKRRRNKFIIPLHSIQELENELMPCSGISIEIPVNGIFRRNSILAYFDDPRYRRKSSGIIKYGTIETHSVIKKEDLIEYRGVKEFRPKYQMKVDRFFFIPEEVHILPGSSSLMVRNNSIVGVDTQITLNLRSRVGGLVRVERKKKRIELKIFSGDIHFPGETDKISRHTGVLIPPGTGKRNSKEYKKVQNWIYVQRITPSKKRFFVLVRPVVTYEITDGINLGTLFPPDPLQERDNVQLRIVNYILYGNGKPIRGISDTSIQLVRTCLVLNWNQDKKSSSCEEARASFVEIRTNGLIRHFLKINLVKSPISYIGKRNDPSGSGLLSDNGSDCTNINPFSAIYSYSKAKIQQSLNQPQGTIHTLLNRNKECQSLIILSAANCSRMEPFKDVKYHSVIKESIKKDPLIPIRNSLGPLGTCLPIENFYSSYHLITHNQILVTKYLQLDNLKQTFQVIKLKYYLMDENGKIFNPDPCRNIILNPFNLNWSFLHHYYCAETSKIISLGQFICENVCIAKNGPPLKSGQVILVQVDSIVIRSAKPYLATPGATVHGHYGETLYEGDTLVTFIYEKSRSGDITQGLPKVEQVLEVRSIDSISMNLEKRVEGWNKCIPRILGIPWGFLIGAELTIAQSRISLVNKIQQVYRSQGVQIHNRHIEIIVRQITSKVLISEDGMSNVFSPGELIGLLRAERMGRALEEAICYRVVLLGITRASLNTQSFISEASFQETARVLAKAALRGRIDWLKGLKENVVLGGVIPVGTGFKGLVHPSKQHNNIPLETKKTNLFEGEMRDILFHHRKLFDSCLSKKFHDIPEQSFIGFNDS.

Residues C224, C295, C302, and C305 each contribute to the Zn(2+) site.

The protein belongs to the RNA polymerase beta' chain family. RpoC2 subfamily. In terms of assembly, in plastids the minimal PEP RNA polymerase catalytic core is composed of four subunits: alpha, beta, beta', and beta''. When a (nuclear-encoded) sigma factor is associated with the core the holoenzyme is formed, which can initiate transcription. The cofactor is Zn(2+).

It localises to the plastid. Its subcellular location is the chloroplast. The enzyme catalyses RNA(n) + a ribonucleoside 5'-triphosphate = RNA(n+1) + diphosphate. Its function is as follows. DNA-dependent RNA polymerase catalyzes the transcription of DNA into RNA using the four ribonucleoside triphosphates as substrates. This chain is DNA-directed RNA polymerase subunit beta'', found in Solanum lycopersicum (Tomato).